Here is a 138-residue protein sequence, read N- to C-terminus: Basic phospholipase A2 RV-4 (138 aa).

An N-terminal signal peptide occupies residues 1–16 (MRTLWIVAVCLIGVEG). 7 disulfide bridges follow: C42/C131, C44/C60, C59/C111, C65/C138, C66/C104, C73/C97, and C91/C102. The Ca(2+) site is built by Y43, G45, and G47. H63 is an active-site residue. Residue D64 participates in Ca(2+) binding. D105 is an active-site residue.

This sequence belongs to the phospholipase A2 family. Group II subfamily. D49 sub-subfamily. Heterodimer of a weakly toxic basic protein having phospholipase A2 activity (RV-4) and a non-toxic acidic protein which inhibits its enzymatic activity but potentiates its lethal potency and neurotoxicity (RV-7). Ca(2+) serves as cofactor. As to expression, expressed by the venom gland.

The protein resides in the secreted. The enzyme catalyses a 1,2-diacyl-sn-glycero-3-phosphocholine + H2O = a 1-acyl-sn-glycero-3-phosphocholine + a fatty acid + H(+). Its function is as follows. Heterodimer RV-4/RV-7: acts as a presynaptic neurotoxin. In terms of biological role, monomer: snake venom phospholipase A2 (PLA2) that acts as a presynaptic neurotoxin. PLA2 catalyzes the calcium-dependent hydrolysis of the 2-acyl groups in 3-sn-phosphoglycerides. This is Basic phospholipase A2 RV-4 from Daboia siamensis (Eastern Russel's viper).